The chain runs to 549 residues: Elongator complex protein 3 (549 aa).

The 291-residue stretch at 84–374 (RTASGIAVVA…YRVQRDIPMP (291 aa)) folds into the Radical SAM core domain. The [4Fe-4S] cluster site is built by C101, C111, and C114. Residues K166, 476-479 (ELHV), 499-501 (FGM), and Y532 each bind acetyl-CoA. Positions 398–549 (TECRDVRTRE…EGPYMVKKLD (152 aa)) constitute an N-acetyltransferase domain.

The protein belongs to the ELP3 family. In terms of assembly, component of the elongator complex. Interacts with transcriptional repressors snai1 and snai2; interaction with snai1 inhibits its ubiquitination and stabilizes it. [4Fe-4S] cluster serves as cofactor.

The protein resides in the cytoplasm. It is found in the nucleus. The catalysed reaction is uridine(34) in tRNA + acetyl-CoA + S-adenosyl-L-methionine + H2O = 5-(carboxymethyl)uridine(34) in tRNA + 5'-deoxyadenosine + L-methionine + CoA + 2 H(+). Its pathway is tRNA modification; 5-methoxycarbonylmethyl-2-thiouridine-tRNA biosynthesis. Its function is as follows. Catalytic tRNA acetyltransferase subunit of the elongator complex which is required for multiple tRNA modifications, including mcm5U (5-methoxycarbonylmethyl uridine), mcm5s2U (5-methoxycarbonylmethyl-2-thiouridine), and ncm5U (5-carbamoylmethyl uridine). In the elongator complex, acts as a tRNA uridine(34) acetyltransferase by mediating formation of carboxymethyluridine in the wobble base at position 34 in tRNAs. Stabilizes transcriptional repressor snai1 by inhibiting its ubiquitination which promotes neural crest cell migration. The chain is Elongator complex protein 3 from Xenopus tropicalis (Western clawed frog).